The primary structure comprises 428 residues: AA14 family lytic polysaccharide monooxygenase A (428 aa).

A signal peptide spans 1–21 (MLRSLPASLALVAAFASKASA). Residues Asn-34 and Asn-52 are each glycosylated (N-linked (GlcNAc...) asparagine). 5 cysteine pairs are disulfide-bonded: Cys-88–Cys-112, Cys-131–Cys-158, Cys-174–Cys-179, Cys-181–Cys-203, and Cys-223–Cys-239. Asn-155 carries an N-linked (GlcNAc...) asparagine glycan. Disordered regions lie at residues 216–239 (KPAV…PGNC) and 292–428 (SSGT…HNAH). The span at 223–232 (CGADPDHGKP) shows a compositional bias: basic and acidic residues. Asn-238 carries an N-linked (GlcNAc...) asparagine glycan. Residues 292 to 379 (SSGTGSSPTS…SVATEASSSP (88 aa)) are compositionally biased toward low complexity. Positions 380–402 (IASTTVDEAVVSSSTVGSINPTR) are enriched in polar residues. Basic residues predominate over residues 414-428 (QKKKRKHARHLHNAH).

The cofactor is Cu(2+).

The protein localises to the secreted. Functionally, lytic polysaccharide monooxygenase (LPMO) showing oxidase and peroxidase activities that are common for LPMOs. Catalysis by LPMOs requires the reduction of the active-site copper from Cu(II) to Cu(I) by a reducing agent and H(2)O(2) or O(2) as a cosubstrate. Shows no activity on cellulose-associated xylan or any other tested polysaccharide substrate, meaning that the substrate rremains unknown. The sequence is that of AA14 family lytic polysaccharide monooxygenase A from Trametes coccinea (strain BRFM310) (Pycnoporus coccineus).